The chain runs to 152 residues: Ribosomal RNA large subunit methyltransferase H (152 aa).

Residues Leu68, Gly100, and 119–124 (LGVMTW) contribute to the S-adenosyl-L-methionine site.

Belongs to the RNA methyltransferase RlmH family. As to quaternary structure, homodimer.

Its subcellular location is the cytoplasm. It carries out the reaction pseudouridine(1915) in 23S rRNA + S-adenosyl-L-methionine = N(3)-methylpseudouridine(1915) in 23S rRNA + S-adenosyl-L-homocysteine + H(+). Functionally, specifically methylates the pseudouridine at position 1915 (m3Psi1915) in 23S rRNA. The sequence is that of Ribosomal RNA large subunit methyltransferase H from Rhodospirillum rubrum (strain ATCC 11170 / ATH 1.1.1 / DSM 467 / LMG 4362 / NCIMB 8255 / S1).